The following is a 315-amino-acid chain: MTIRLLCYMGFYFLGAGLMEADIYQTPRYLVIGTGKKITLECSQTMGHDKMYWYQQDPGMELHLIHYSYGVNSTEKGDLSSESTVSRIRTEHFPLTLESARPSHTSQYLCASSEARGLAEFTDTQYFGPGTRLTVLEDLKNVFPPEVAVFEPSEAEISHTQKATLVCLATGFYPDHVELSWWVNGKEVHSGVSTDPQPLKEQPALNDSRYCLSSRLRVSATFWQNPRNHFRCQVQFYGLSENDEWTQDRAKPVTQIVSAEAWGRADCGFTSESYQQGVLSATILYEILLGKATLYAVLVSALVLMAMVKRKDSRG.

The signal sequence occupies residues M1–A21. In terms of domain architecture, Ig-like V-type spans D22–E114. The t cell receptor beta variable 25-1 stretch occupies residues D22–E114. A disulfide bridge links C42 with C110. The segment at M46–K50 is CDR1. The tract at residues S68 to S73 is CDR2. The N-linked (GlcNAc...) asparagine glycan is linked to N72. The CDR3 stretch occupies residues C110 to F127. The interval T122 to L136 is t cell receptor beta joining 2-3. Residues D138 to G315 are t cell receptor beta constant 2. Positions P145–T254 constitute an Ig-like C1-type domain. C167 and C232 are joined by a disulfide. N206 carries an N-linked (GlcNAc...) asparagine glycan. Positions C267 to A281 are connecting peptide. Residues T282 to L304 form a helical membrane-spanning segment. The Cytoplasmic segment spans residues M305–G315.

Disulfide-linked heterodimer with TRAV38-2DV8*01J31*01C*01 alpha chain. The alpha-beta TR associates with the transmembrane signaling CD3 coreceptor proteins to form the TR-CD3 (TCR). The assembly of alpha-beta TR heterodimers with CD3 occurs in the endoplasmic reticulum where a single alpha-beta TR heterodimer associates with one CD3D-CD3E heterodimer, one CD3G-CD3E heterodimer and one CD247 homodimer forming a stable octameric structure. CD3D-CD3E and CD3G-CD3E heterodimers preferentially associate with TR alpha and TR beta chains (via TM domain), respectively. The association of the CD247 homodimer is the last step of TCR assembly in the endoplasmic reticulum and is required for transport to the cell surface. Expressed in MR1-restricted CD8-positive T cells.

It localises to the cell membrane. Its function is as follows. The beta chain of TRAV38-2DV8*01J31*01C*01/TRBV25-1*01J2S3*01C2*01 alpha-beta T cell receptor (TR) clonotype that displays pan-cancer cell recognition via the invariant MR1 molecule. On CD8-positive T cell clone MC.7.G5, likely recognizes tumor-specific or -associated metabolite(s) essential for cancer cell survival, triggering killing of many cancer cell types including lung, melanoma, leukemia, colon, breast, prostate, bone and ovarian cancer cells. Mediates cancer cell cytotoxicity in an HLA-independent manner. Has no reactivity to healthy cells even stressed or infected by bacteria. Antigen recognition initiates TR-CD3 clustering on the cell surface and intracellular activation of LCK that phosphorylates the ITAM motifs of CD3G, CD3D, CD3E and CD247 enabling the recruitment of ZAP70. In turn, ZAP70 phosphorylates LAT, which recruits numerous signaling molecules to form the LAT signalosome. The LAT signalosome propagates signal branching to three major signaling pathways, the calcium, the mitogen-activated protein kinase (MAPK) kinase and the nuclear factor NF-kappa-B (NF-kB) pathways, leading to the mobilization of transcription factors that are critical for gene expression and essential for T cell differentiation into effector/memory T cells. In Homo sapiens (Human), this protein is T cell receptor beta chain MC.7.G5.